A 59-amino-acid polypeptide reads, in one-letter code: Large ribosomal subunit protein uL30 (59 aa).

Belongs to the universal ribosomal protein uL30 family. Part of the 50S ribosomal subunit.

This Staphylococcus haemolyticus (strain JCSC1435) protein is Large ribosomal subunit protein uL30.